We begin with the raw amino-acid sequence, 877 residues long: Hopanoid transporter HpnN (877 aa).

Topologically, residues 1–16 are cytoplasmic; sequence MVTSLIVRLVAWSVRR. The helical transmembrane segment at 17-37 threads the bilayer; it reads PVWVVVLSLLIAAFSGVYVAR. Residues 38–279 are Periplasmic-facing; it reads HFKINTDISK…FSSVEDGAAL (242 aa). Residues 280 to 295 form a helical membrane-spanning segment; it reads NGVVTLLVVFVILWLA. Residues 296-299 lie on the Cytoplasmic side of the membrane; the sequence is LRSK. Residues 300–323 form a helical membrane-spanning segment; that stretch reads RMIASVLVTLFVGLVVTAALGLAM. Residues 302–428 enclose the SSD domain; sequence IASVLVTLFV…LTLLPALLRL (127 aa). Residues 324 to 332 are Periplasmic-facing; the sequence is VGSLNMISV. Residues 333 to 351 traverse the membrane as a helical segment; that stretch reads AFMVLFVGLGVDFSIQYGV. Residues 352–373 are Cytoplasmic-facing; it reads KYREERFRDERIDHALIGAAHS. Residues 374–394 form a helical membrane-spanning segment; the sequence is MGMPLALATTAVAASFFSFIP. The Periplasmic segment spans residues 395-399; it reads TAYRG. Residues 400-426 traverse the membrane as a helical segment; it reads VSELGLIAGVGMFVALLTTLTLLPALL. Residues 427-452 lie on the Cytoplasmic side of the membrane; the sequence is RLFAPPGESKTPGFPWLAPVDDYLDR. Residues 453–472 form a helical membrane-spanning segment; the sequence is HRKPILIGTLAVVIGALPLL. The Periplasmic segment spans residues 473–718; the sequence is AFLHFDFNPL…ILHSANTIIS (246 aa). Residues 719–739 traverse the membrane as a helical segment; it reads AFLHAALWSIISITILLWITL. Residues 740–743 lie on the Cytoplasmic side of the membrane; it reads RRFG. Residues 744–766 form a helical membrane-spanning segment; the sequence is DVLRTLVPLLVSGIVTLEMCVVL. Residues 767–774 lie on the Periplasmic side of the membrane; it reads GMSLNFAN. Residues 775–794 traverse the membrane as a helical segment; sequence IIALPLMLGVGVAFKVYFVM. At 795–809 the chain is on the cytoplasmic side; the sequence is AWRAGQTGLLHSSLT. The helical transmembrane segment at 810 to 827 threads the bilayer; the sequence is HAVLFSAATTATAFGSLW. The Periplasmic segment spans residues 828-836; sequence LSHHPGTSS. A helical membrane pass occupies residues 837–858; it reads MGKLLALALTCTLIGAVVFQPV. Residues 859–877 lie on the Cytoplasmic side of the membrane; that stretch reads LMGKPRVKRAKNQSQGINE.

This sequence belongs to the resistance-nodulation-cell division (RND) (TC 2.A.6) family. MmpL subfamily. Homodimer.

The protein localises to the cell inner membrane. Functionally, essential for hopanoid transport from the cytoplasmic to the outer membrane. Is capable of shuttling hopanoid lipids from the inner membrane to the periplasm, where they probably spontaneously insert to the inner leaflet of the outer membrane, strengthening the cell envelope. May be a proton-motive-force (PMF)-dependent transporter. Is critical for multidrug resistance and cell wall remodeling in Burkholderia. In Burkholderia multivorans (strain ATCC 17616 / 249), this protein is Hopanoid transporter HpnN.